A 786-amino-acid polypeptide reads, in one-letter code: MDKERYSRSHRDDRDRDSSPDHSPQREGGRRRDRDVDSKRRDSDHYRSSRRGDREDERDRTKDRRGRSVERGEREGSRDREKHHHERSHEGSKEKESRSKRKDREEENGARDGKKKSRFADGNGERRSRFEDVAIEVENKDAQVSEGSGATNPTSGVTMGASTYSSIPSEASAAPSQTLLTKVSSISTTDENKASVVRSHEVPGKSSTDGRPLSTAGKSSANLPLDSSALAAKARKALQLQKGLADRLKNLPLLKKATKPTSEGSPHTRVPPSTTTPAVSTGTSFASTLPHTGLAGFGSIANIEAVKRAQELAANMGFHQDREFAPVINLFPGQAPSDMTVAQRPEKPPVLRVDALGREIDEHGNVISVTKPSNLSTLKVNINKKKKDAFQILKPQLEADLKENPYFDTRMGIDEKKILRPKRMSFQFVEEGKWTRDAENLKFKSHFGEAKAKELKVKQAQLAKANDDINPNLIEVSERVPRKEKPKEPIPDVEWWDANVLTNGEYGEITDGTITESHLKIEKLTHYIEHPRPIEPPAEAAPPPPQPLKLTKKEQKKLRTQRRLAKEKEKQEMIRQGLLEPPKAKVKMSNLMKVLGSEATQDPTKLEKEIRTAAAEREQAHTDRNAARKLTPAEKREKKERKLFDDPTTVETIVSVYKIKKLSHPKTRFKVEMNARENRLTGCSVMTDEMSVVVVEGKSKAIKRYGKLMMKRINWEEAERKEGNEDEEEEVNGGNKCWLVWQGSIGKPSFHRFHVHECVTESTAKKVFMDAGVVHYWDLAVNYSDD.

3 stretches are compositionally biased toward basic and acidic residues: residues 1–80, 87–112, and 123–143; these read MDKE…SRDR, RSHE…GARD, and NGER…KDAQ. Disordered regions lie at residues 1-223, 255-283, 532-557, and 616-642; these read MDKE…SANL, KKAT…STGT, RPIE…EQKK, and EREQ…KERK. Polar residues predominate over residues 145–164; it reads SEGSGATNPTSGVTMGASTY. Positions 165–176 are enriched in low complexity; the sequence is SSIPSEASAAPS. Positions 177–189 are enriched in polar residues; it reads QTLLTKVSSISTT. The segment covering 190–203 has biased composition (basic and acidic residues); that stretch reads DENKASVVRSHEVP. Over residues 268 to 283 the composition is skewed to low complexity; sequence TRVPPSTTTPAVSTGT. Residues 534 to 547 show a composition bias toward pro residues; it reads IEPPAEAAPPPPQP.

The protein localises to the nucleus. The protein resides in the nucleoplasm. Functionally, functions in the RNA-directed DNA methylation (RdDM) pathway. Acts as a pre-mRNA splicing factor, likely by affecting Pol V transcripts. Affects DNA methylation of transposable elements (TEs) and preferentially influences NRPD1- and ROS1-targeted loci. In Arabidopsis thaliana (Mouse-ear cress), this protein is Protein RDM16.